The following is a 161-amino-acid chain: 3-isopropylmalate dehydratase small subunit (161 aa).

The protein belongs to the LeuD family. LeuD type 2 subfamily. In terms of assembly, heterodimer of LeuC and LeuD.

The catalysed reaction is (2R,3S)-3-isopropylmalate = (2S)-2-isopropylmalate. Its pathway is amino-acid biosynthesis; L-leucine biosynthesis; L-leucine from 3-methyl-2-oxobutanoate: step 2/4. Catalyzes the isomerization between 2-isopropylmalate and 3-isopropylmalate, via the formation of 2-isopropylmaleate. The protein is 3-isopropylmalate dehydratase small subunit of Sulfolobus acidocaldarius (strain ATCC 33909 / DSM 639 / JCM 8929 / NBRC 15157 / NCIMB 11770).